Consider the following 443-residue polypeptide: Chromosomal replication initiator protein DnaA (443 aa).

Residues 1–73 (MYGDYRQIWE…YDAASKVTNR (73 aa)) are domain I, interacts with DnaA modulators. Residues 73–106 (RFIEIKILSEDEEEYREIKESIERENSSESTLLS) form a domain II region. Residues 107 to 323 (TLNPKYTFDT…GALIRIVAFA (217 aa)) form a domain III, AAA+ region region. ATP is bound by residues glycine 151, glycine 153, lysine 154, and threonine 155. The tract at residues 324-443 (TLTKSNIDLE…EELKKRIKGY (120 aa)) is domain IV, binds dsDNA.

Belongs to the DnaA family. In terms of assembly, oligomerizes as a right-handed, spiral filament on DNA at oriC.

It localises to the cytoplasm. Functionally, plays an essential role in the initiation and regulation of chromosomal replication. ATP-DnaA binds to the origin of replication (oriC) to initiate formation of the DNA replication initiation complex once per cell cycle. Binds the DnaA box (a 9 base pair repeat at the origin) and separates the double-stranded (ds)DNA. Forms a right-handed helical filament on oriC DNA; dsDNA binds to the exterior of the filament while single-stranded (ss)DNA is stabiized in the filament's interior. The ATP-DnaA-oriC complex binds and stabilizes one strand of the AT-rich DNA unwinding element (DUE), permitting loading of DNA polymerase. After initiation quickly degrades to an ADP-DnaA complex that is not apt for DNA replication. Binds acidic phospholipids. This is Chromosomal replication initiator protein DnaA from Caldanaerobacter subterraneus subsp. tengcongensis (strain DSM 15242 / JCM 11007 / NBRC 100824 / MB4) (Thermoanaerobacter tengcongensis).